Here is a 308-residue protein sequence, read N- to C-terminus: Ribosomal RNA small subunit methyltransferase H (308 aa).

Residues 34–36 (GGH), aspartate 54, phenylalanine 85, aspartate 99, and glutamine 106 each bind S-adenosyl-L-methionine.

The protein belongs to the methyltransferase superfamily. RsmH family.

It is found in the cytoplasm. It carries out the reaction cytidine(1402) in 16S rRNA + S-adenosyl-L-methionine = N(4)-methylcytidine(1402) in 16S rRNA + S-adenosyl-L-homocysteine + H(+). Its function is as follows. Specifically methylates the N4 position of cytidine in position 1402 (C1402) of 16S rRNA. This Dichelobacter nodosus (strain VCS1703A) protein is Ribosomal RNA small subunit methyltransferase H.